Consider the following 252-residue polypeptide: Isoprenyl transferase (252 aa).

Asp32 is a catalytic residue. Asp32 provides a ligand contact to Mg(2+). Residues 33–36, Trp37, Arg45, His49, and 77–79 contribute to the substrate site; these read GNGR and STE. Asn80 serves as the catalytic Proton acceptor. Substrate contacts are provided by residues Trp81, Arg83, Arg200, and 206-208; that span reads RLS. Mg(2+) is bound at residue Glu219.

It belongs to the UPP synthase family. Homodimer. Requires Mg(2+) as cofactor.

Its function is as follows. Catalyzes the condensation of isopentenyl diphosphate (IPP) with allylic pyrophosphates generating different type of terpenoids. The protein is Isoprenyl transferase of Listeria monocytogenes serovar 1/2a (strain ATCC BAA-679 / EGD-e).